A 293-amino-acid polypeptide reads, in one-letter code: Formamidopyrimidine-DNA glycosylase (293 aa).

The active-site Schiff-base intermediate with DNA is Pro-2. The active-site Proton donor is the Glu-3. The active-site Proton donor; for beta-elimination activity is Lys-58. Residues His-104, Arg-123, and Arg-166 each coordinate DNA. The segment at 257-293 (QVYDREGDKCRTPACKGAVKRFTQNGRSTFWCPVCQT) adopts an FPG-type zinc-finger fold. Arg-283 serves as the catalytic Proton donor; for delta-elimination activity.

This sequence belongs to the FPG family. In terms of assembly, monomer. Zn(2+) is required as a cofactor.

The enzyme catalyses Hydrolysis of DNA containing ring-opened 7-methylguanine residues, releasing 2,6-diamino-4-hydroxy-5-(N-methyl)formamidopyrimidine.. The catalysed reaction is 2'-deoxyribonucleotide-(2'-deoxyribose 5'-phosphate)-2'-deoxyribonucleotide-DNA = a 3'-end 2'-deoxyribonucleotide-(2,3-dehydro-2,3-deoxyribose 5'-phosphate)-DNA + a 5'-end 5'-phospho-2'-deoxyribonucleoside-DNA + H(+). In terms of biological role, involved in base excision repair of DNA damaged by oxidation or by mutagenic agents. Acts as a DNA glycosylase that recognizes and removes damaged bases. Has a preference for oxidized purines, such as 7,8-dihydro-8-oxoguanine (8-oxoG). Has AP (apurinic/apyrimidinic) lyase activity and introduces nicks in the DNA strand. Cleaves the DNA backbone by beta-delta elimination to generate a single-strand break at the site of the removed base with both 3'- and 5'-phosphates. The sequence is that of Formamidopyrimidine-DNA glycosylase from Nitrobacter winogradskyi (strain ATCC 25391 / DSM 10237 / CIP 104748 / NCIMB 11846 / Nb-255).